Consider the following 397-residue polypeptide: MERFKKASSIIETLKQQGHEAYFVGGSVRDLIIDRPIGDIDIATSALPEEVMAIFPRHVPVGLEHGTVIVVENGEPYEVTTFRTESEYEDFRRPSSVQFVRSLEEDLKRRDFTMNAIAMTEEGEMVDLFAGQEAIQKREIVTVGNAADRFQEDALRMMRGIRFVSTLGFSLETKTKQAIETYGHLLEHIAIERITVEFEKLLTGTYCVKGLKELVETKLFSHLPYLQMSEERLLKATQYNWDSFETDIEAWAFFLYCIGEEHPSVFLRQWKFSNKKIKDIVAVLLTIRKRKEKDWDTVLLYKTGIHIAEMAERVYEAMIESYDHTSVERVQTLFQALPIKSRQEMDVTGNDLLNWASKKPGPWVAEMIQKIEEAIVQGNVVNEKECIREWLQECNLL.

ATP contacts are provided by Gly26 and Arg29. Positions 26 and 29 each coordinate CTP. Mg(2+) contacts are provided by Asp39 and Asp41. Arg110, Asp153, Arg156, Arg159, and Arg162 together coordinate ATP. Residues Arg110, Asp153, Arg156, Arg159, and Arg162 each contribute to the CTP site.

The protein belongs to the tRNA nucleotidyltransferase/poly(A) polymerase family. Bacterial CCA-adding enzyme type 3 subfamily. As to quaternary structure, homodimer. Mg(2+) is required as a cofactor.

It catalyses the reaction a tRNA precursor + 2 CTP + ATP = a tRNA with a 3' CCA end + 3 diphosphate. The catalysed reaction is a tRNA with a 3' CCA end + 2 CTP + ATP = a tRNA with a 3' CCACCA end + 3 diphosphate. Functionally, catalyzes the addition and repair of the essential 3'-terminal CCA sequence in tRNAs without using a nucleic acid template. Adds these three nucleotides in the order of C, C, and A to the tRNA nucleotide-73, using CTP and ATP as substrates and producing inorganic pyrophosphate. tRNA 3'-terminal CCA addition is required both for tRNA processing and repair. Also involved in tRNA surveillance by mediating tandem CCA addition to generate a CCACCA at the 3' terminus of unstable tRNAs. While stable tRNAs receive only 3'-terminal CCA, unstable tRNAs are marked with CCACCA and rapidly degraded. In Bacillus thuringiensis subsp. konkukian (strain 97-27), this protein is CCA-adding enzyme.